Consider the following 75-residue polypeptide: Sec-independent protein translocase protein TatA (75 aa).

A helical transmembrane segment spans residues 1-21; sequence MGSFSIWHWLIVLVIVALVFG. Positions 44–75 are disordered; sequence KDANSDKPAEQVTQQKVADDTIDVQAKEKTNS.

This sequence belongs to the TatA/E family. The Tat system comprises two distinct complexes: a TatABC complex, containing multiple copies of TatA, TatB and TatC subunits, and a separate TatA complex, containing only TatA subunits. Substrates initially bind to the TatABC complex, which probably triggers association of the separate TatA complex to form the active translocon.

The protein resides in the cell inner membrane. In terms of biological role, part of the twin-arginine translocation (Tat) system that transports large folded proteins containing a characteristic twin-arginine motif in their signal peptide across membranes. TatA could form the protein-conducting channel of the Tat system. This is Sec-independent protein translocase protein TatA from Bordetella petrii (strain ATCC BAA-461 / DSM 12804 / CCUG 43448).